The primary structure comprises 833 residues: Ventricular zone-expressed PH domain-containing protein 1 (833 aa).

Interaction with TGFBR1 regions lie at residues 201-319 and 663-833; these read AELL…LANM and ESTF…TTYL. One can recognise a PH domain in the interval 716–819; it reads QPLIEGKLKE…WLQCINVALA (104 aa).

Belongs to the MELT/VEPH family. As to quaternary structure, interacts with TGFBR1. Specifically expressed in kidney and eye. In the eye, expressed in retinal pigmented epithelium but not in the neural retina.

Its subcellular location is the cell membrane. Its function is as follows. Interacts with TGF-beta receptor type-1 (TGFBR1) and inhibits dissociation of activated SMAD2 from TGFBR1, impeding its nuclear accumulation and resulting in impaired TGF-beta signaling. May also affect FOXO, Hippo and Wnt signaling. The protein is Ventricular zone-expressed PH domain-containing protein 1 (Veph1) of Mus musculus (Mouse).